The sequence spans 503 residues: Aspartyl/glutamyl-tRNA(Asn/Gln) amidotransferase subunit B (503 aa).

This sequence belongs to the GatB/GatE family. GatB subfamily. Heterotrimer of A, B and C subunits.

It carries out the reaction L-glutamyl-tRNA(Gln) + L-glutamine + ATP + H2O = L-glutaminyl-tRNA(Gln) + L-glutamate + ADP + phosphate + H(+). The enzyme catalyses L-aspartyl-tRNA(Asn) + L-glutamine + ATP + H2O = L-asparaginyl-tRNA(Asn) + L-glutamate + ADP + phosphate + 2 H(+). Functionally, allows the formation of correctly charged Asn-tRNA(Asn) or Gln-tRNA(Gln) through the transamidation of misacylated Asp-tRNA(Asn) or Glu-tRNA(Gln) in organisms which lack either or both of asparaginyl-tRNA or glutaminyl-tRNA synthetases. The reaction takes place in the presence of glutamine and ATP through an activated phospho-Asp-tRNA(Asn) or phospho-Glu-tRNA(Gln). The protein is Aspartyl/glutamyl-tRNA(Asn/Gln) amidotransferase subunit B of Rhodococcus jostii (strain RHA1).